The chain runs to 409 residues: uncharacterized protein (409 aa).

It belongs to the mimivirus L17x/L18x family.

This is an uncharacterized protein from Acanthamoeba polyphaga mimivirus (APMV).